A 209-amino-acid chain; its full sequence is Probable nicotinate-nucleotide adenylyltransferase (209 aa).

The protein belongs to the NadD family.

It catalyses the reaction nicotinate beta-D-ribonucleotide + ATP + H(+) = deamido-NAD(+) + diphosphate. It participates in cofactor biosynthesis; NAD(+) biosynthesis; deamido-NAD(+) from nicotinate D-ribonucleotide: step 1/1. Functionally, catalyzes the reversible adenylation of nicotinate mononucleotide (NaMN) to nicotinic acid adenine dinucleotide (NaAD). The protein is Probable nicotinate-nucleotide adenylyltransferase of Shewanella woodyi (strain ATCC 51908 / MS32).